The sequence spans 336 residues: Fructose-1,6-bisphosphatase class 1 (336 aa).

Positions 98, 117, 119, and 120 each coordinate Mg(2+). Substrate-binding positions include 120 to 123 (DGSS), Asn-210, and Lys-276. Glu-282 contacts Mg(2+).

The protein belongs to the FBPase class 1 family. Homotetramer. The cofactor is Mg(2+).

It is found in the cytoplasm. The enzyme catalyses beta-D-fructose 1,6-bisphosphate + H2O = beta-D-fructose 6-phosphate + phosphate. It participates in carbohydrate biosynthesis; gluconeogenesis. This is Fructose-1,6-bisphosphatase class 1 from Caulobacter vibrioides (strain ATCC 19089 / CIP 103742 / CB 15) (Caulobacter crescentus).